Consider the following 230-residue polypeptide: tRNA pseudouridine synthase B (230 aa).

Aspartate 45 (nucleophile) is an active-site residue.

The protein belongs to the pseudouridine synthase TruB family. Type 1 subfamily.

It carries out the reaction uridine(55) in tRNA = pseudouridine(55) in tRNA. Its function is as follows. Responsible for synthesis of pseudouridine from uracil-55 in the psi GC loop of transfer RNAs. The chain is tRNA pseudouridine synthase B from Endomicrobium trichonymphae.